A 348-amino-acid chain; its full sequence is MASREDELRNCVVCGDQATGYHFNALTCEGCKGFFRRTVSKSIGPTCPFAGSCEVSKTQRRHCPACRLQKCLDAGMRKDMILSAEALALRRAKQAQRRAQQTPVQLSKEQEELIRTLLGAHTRHMGTMFEQFVQFRPPAHLFIHHQPLPTLAPVLPLVTHFADINTFMVLQVIKFTKDLPVFRSLPIEDQISLLKGAAVEICHIVLNTTFCLQTQNFLCGPLRYTIEDGARVGFQVEFLELLFHFHGTLRKLQLQEPEYVLLAAMALFSPDRPGVTQRDEIDQLQEEMALTLQSYIKGQQRRPRDRFLYAKLLGLLAELRSINEAYGYQIQHIQGLSAMMPLLQEICS.

Positions 8–83 form a DNA-binding region, nuclear receptor; that stretch reads LRNCVVCGDQ…AGMRKDMILS (76 aa). The NR C4-type zinc finger occupies 11 to 31; that stretch reads CVVCGDQATGYHFNALTCEGC. Thr-38 is modified (phosphothreonine; by PKC). An NR C4-type zinc finger spans residues 47–71; sequence CPFAGSCEVSKTQRRHCPACRLQKC. The NR LBD domain maps to 109–348; sequence EQEELIRTLL…MMPLLQEICS (240 aa).

It belongs to the nuclear hormone receptor family. NR1 subfamily. Heterodimer of NR1I3 and RXR. Interacts with PSMC4. Interacts with ECT2. Directly interacts with DNAJC7; this complex may also include HSP90. Interacts with CRY1. Interacts with CRY2 in a ligand-dependent manner. In terms of processing, phosphorylated at Thr-38 by PKC, dephosphorylation of Thr-38 is required for nuclear translocation and activation.

It localises to the nucleus. The protein resides in the cytoplasm. It is found in the cytoskeleton. Its function is as follows. Binds and transactivates the retinoic acid response elements that control expression of the retinoic acid receptor beta 2 and alcohol dehydrogenase 3 genes. Transactivates both the phenobarbital responsive element module of the human CYP2B6 gene and the CYP3A4 xenobiotic response element. This chain is Nuclear receptor subfamily 1 group I member 3 (NR1I3), found in Pan troglodytes (Chimpanzee).